We begin with the raw amino-acid sequence, 198 residues long: Transmembrane protein 17 (198 aa).

N13 and N23 each carry an N-linked (GlcNAc...) asparagine glycan. 4 consecutive transmembrane segments (helical) span residues 45–65 (MSLY…IMML), 78–98 (FIVI…LYLG), 110–130 (LAGF…FLLF), and 142–162 (AIHI…FLTL).

It belongs to the TMEM17 family. Part of the tectonic-like complex (also named B9 complex).

Its subcellular location is the cell projection. The protein resides in the cilium membrane. Transmembrane component of the tectonic-like complex, a complex localized at the transition zone of primary cilia and acting as a barrier that prevents diffusion of transmembrane proteins between the cilia and plasma membranes. Required for ciliogenesis and sonic hedgehog/SHH signaling. In Homo sapiens (Human), this protein is Transmembrane protein 17 (TMEM17).